Consider the following 196-residue polypeptide: Recombination protein RecR (196 aa).

The C4-type zinc finger occupies 55–70 (CELCGNLESESPCSIC). One can recognise a Toprim domain in the interval 78-173 (DIVCVVEEIT…KLSFLAHGIP (96 aa)).

Belongs to the RecR family.

May play a role in DNA repair. It seems to be involved in an RecBC-independent recombinational process of DNA repair. It may act with RecF and RecO. The polypeptide is Recombination protein RecR (Neorickettsia sennetsu (strain ATCC VR-367 / Miyayama) (Ehrlichia sennetsu)).